The following is a 205-amino-acid chain: Protein GrpE (205 aa).

Residues 1–40 (MSRKLHEEELTPEGMDAAQNADPAGDPVSENEGALPAAEP) form a disordered region.

The protein belongs to the GrpE family. As to quaternary structure, homodimer.

Its subcellular location is the cytoplasm. Participates actively in the response to hyperosmotic and heat shock by preventing the aggregation of stress-denatured proteins, in association with DnaK and GrpE. It is the nucleotide exchange factor for DnaK and may function as a thermosensor. Unfolded proteins bind initially to DnaJ; upon interaction with the DnaJ-bound protein, DnaK hydrolyzes its bound ATP, resulting in the formation of a stable complex. GrpE releases ADP from DnaK; ATP binding to DnaK triggers the release of the substrate protein, thus completing the reaction cycle. Several rounds of ATP-dependent interactions between DnaJ, DnaK and GrpE are required for fully efficient folding. The polypeptide is Protein GrpE (Acidobacterium capsulatum (strain ATCC 51196 / DSM 11244 / BCRC 80197 / JCM 7670 / NBRC 15755 / NCIMB 13165 / 161)).